The primary structure comprises 293 residues: Bifunctional protein FolD (293 aa).

NADP(+) is bound by residues 165–167, Thr-194, and Val-235; that span reads GRS.

Belongs to the tetrahydrofolate dehydrogenase/cyclohydrolase family. Homodimer.

It catalyses the reaction (6R)-5,10-methylene-5,6,7,8-tetrahydrofolate + NADP(+) = (6R)-5,10-methenyltetrahydrofolate + NADPH. It carries out the reaction (6R)-5,10-methenyltetrahydrofolate + H2O = (6R)-10-formyltetrahydrofolate + H(+). Its pathway is one-carbon metabolism; tetrahydrofolate interconversion. Catalyzes the oxidation of 5,10-methylenetetrahydrofolate to 5,10-methenyltetrahydrofolate and then the hydrolysis of 5,10-methenyltetrahydrofolate to 10-formyltetrahydrofolate. This chain is Bifunctional protein FolD, found in Syntrophus aciditrophicus (strain SB).